The following is a 138-amino-acid chain: Phosphoribosyl-AMP cyclohydrolase (138 aa).

A Mg(2+)-binding site is contributed by D92. C93 provides a ligand contact to Zn(2+). 2 residues coordinate Mg(2+): D94 and D96. Positions 109 and 116 each coordinate Zn(2+).

This sequence belongs to the PRA-CH family. As to quaternary structure, homodimer. Requires Mg(2+) as cofactor. Zn(2+) is required as a cofactor.

It is found in the cytoplasm. The catalysed reaction is 1-(5-phospho-beta-D-ribosyl)-5'-AMP + H2O = 1-(5-phospho-beta-D-ribosyl)-5-[(5-phospho-beta-D-ribosylamino)methylideneamino]imidazole-4-carboxamide. Its pathway is amino-acid biosynthesis; L-histidine biosynthesis; L-histidine from 5-phospho-alpha-D-ribose 1-diphosphate: step 3/9. Functionally, catalyzes the hydrolysis of the adenine ring of phosphoribosyl-AMP. The sequence is that of Phosphoribosyl-AMP cyclohydrolase from Clavibacter sepedonicus (Clavibacter michiganensis subsp. sepedonicus).